A 138-amino-acid polypeptide reads, in one-letter code: Transcription antitermination protein NusB (138 aa).

This sequence belongs to the NusB family.

Involved in transcription antitermination. Required for transcription of ribosomal RNA (rRNA) genes. Binds specifically to the boxA antiterminator sequence of the ribosomal RNA (rrn) operons. The sequence is that of Transcription antitermination protein NusB from Geobacter sulfurreducens (strain ATCC 51573 / DSM 12127 / PCA).